Reading from the N-terminus, the 124-residue chain is Insulin growth factor-like family member 4 (124 aa).

The N-terminal stretch at 1–19 (MVPRISAAIFIFELLGSNS) is a signal peptide. N-linked (GlcNAc...) asparagine glycans are attached at residues Asn-57 and Asn-84.

It belongs to the IGFL family. In terms of tissue distribution, detected in the cerebellum.

It localises to the secreted. The protein is Insulin growth factor-like family member 4 (IGFL4) of Homo sapiens (Human).